An 895-amino-acid polypeptide reads, in one-letter code: WD repeat-containing protein 36 (895 aa).

WD repeat units lie at residues 30–63 (VVRFSALKRRFYVTTCVGKSFHTYDVQKLSLVAV), 72–101 (CCMAADGRLVFAAYGNVFSAFARNKEIVHT), 110–143 (HFLQPFGDHIISVDTDGILIIWHIYSEEEYLQLT), 152–186 (SAILHPSTYLNKILLGSEQGSLQLWNVKSNKLLYT), 193–230 (GVTALQQAPAVDVVAIGLMSGQVIIHNIKFNETLMKFR), 237–272 (TSISFRTDGHPVMAAGSPCGHIGLWDLEDKKLINQM), 277–320 (STAI…RFRM), and 327–361 (TNIRYYGQNGQQILSASQDGTLQSFSTVHEKFNKS). Phosphoserine is present on residues Ser-382 and Ser-399. 6 WD repeats span residues 389–428 (TKFAAEEARESDWDGIIACHQGKLSCSTWNYQKSTIGAYF), 441–475 (ATAVDITSCGNFAVIGLSSGTVDVYNMQSGIHRGS), 486–522 (VRGVAVDGLNQLTVTTGSEGLLKFWNFKNKILIHSVS), 527–562 (PNIMLLHRDSGILGLALDDFSISVLDIETRKIVREF), 564–605 (GHQG…DCFL), and 607–645 (DSAPLNVSMSPTGDFLATSHVDHLGIYLWSNISLYSVVS).

In terms of assembly, part of the small subunit (SSU) processome, composed of more than 70 proteins and the RNA chaperone small nucleolar RNA (snoRNA) U3. In terms of tissue distribution, expressed in heart, placenta, liver, skeletal muscle, kidney and pancreas. In ocular tissues, strong expression in iris, sclera, ciliary muscle, ciliary body, retina and optic nerve.

The protein localises to the nucleus. It is found in the nucleolus. Part of the small subunit (SSU) processome, first precursor of the small eukaryotic ribosomal subunit. During the assembly of the SSU processome in the nucleolus, many ribosome biogenesis factors, an RNA chaperone and ribosomal proteins associate with the nascent pre-rRNA and work in concert to generate RNA folding, modifications, rearrangements and cleavage as well as targeted degradation of pre-ribosomal RNA by the RNA exosome. Involved in the nucleolar processing of SSU 18S rRNA. Involved in T-cell activation and highly coregulated with IL2. This is WD repeat-containing protein 36 from Homo sapiens (Human).